We begin with the raw amino-acid sequence, 133 residues long: Small ribosomal subunit protein uS8 (133 aa).

Belongs to the universal ribosomal protein uS8 family. In terms of assembly, part of the 30S ribosomal subunit. Contacts proteins S5 and S12.

One of the primary rRNA binding proteins, it binds directly to 16S rRNA central domain where it helps coordinate assembly of the platform of the 30S subunit. This Prochlorococcus marinus (strain SARG / CCMP1375 / SS120) protein is Small ribosomal subunit protein uS8.